Reading from the N-terminus, the 247-residue chain is Phosphoribosylaminoimidazole-succinocarboxamide synthase (247 aa).

The protein belongs to the SAICAR synthetase family.

It catalyses the reaction 5-amino-1-(5-phospho-D-ribosyl)imidazole-4-carboxylate + L-aspartate + ATP = (2S)-2-[5-amino-1-(5-phospho-beta-D-ribosyl)imidazole-4-carboxamido]succinate + ADP + phosphate + 2 H(+). It functions in the pathway purine metabolism; IMP biosynthesis via de novo pathway; 5-amino-1-(5-phospho-D-ribosyl)imidazole-4-carboxamide from 5-amino-1-(5-phospho-D-ribosyl)imidazole-4-carboxylate: step 1/2. This is Phosphoribosylaminoimidazole-succinocarboxamide synthase from Methanopyrus kandleri (strain AV19 / DSM 6324 / JCM 9639 / NBRC 100938).